A 396-amino-acid chain; its full sequence is Probable arginine kinase F46H5.3 (396 aa).

The Phosphagen kinase N-terminal domain occupies 47-129 (KIEEGYAKLQ…FDPLIQDYHN (83 aa)). Position 102 to 106 (102 to 106 (GVGVY)) interacts with substrate. In terms of domain architecture, Phosphagen kinase C-terminal spans 159–396 (FINSTRIRCG…AHLIALEKAA (238 aa)). Residues 162-166 (STRIR) and H226 contribute to the ATP site. E266 lines the substrate pocket. R270 is a binding site for ATP. Residue C312 coordinates substrate. Residues 321 to 325 (RASVH), 349 to 354 (RGIHGE), and D364 each bind ATP. E354 contributes to the substrate binding site.

The protein belongs to the ATP:guanido phosphotransferase family.

It catalyses the reaction L-arginine + ATP = N(omega)-phospho-L-arginine + ADP + H(+). This is Probable arginine kinase F46H5.3 from Caenorhabditis elegans.